The sequence spans 282 residues: Bis(5'-nucleosyl)-tetraphosphatase, symmetrical (282 aa).

Belongs to the Ap4A hydrolase family.

It catalyses the reaction P(1),P(4)-bis(5'-adenosyl) tetraphosphate + H2O = 2 ADP + 2 H(+). In terms of biological role, hydrolyzes diadenosine 5',5'''-P1,P4-tetraphosphate to yield ADP. The sequence is that of Bis(5'-nucleosyl)-tetraphosphatase, symmetrical from Salmonella paratyphi A (strain ATCC 9150 / SARB42).